Here is a 311-residue protein sequence, read N- to C-terminus: Putative protease MJ0651 (311 aa).

Serine 128 (nucleophile) is an active-site residue. Lysine 180 (proton donor/acceptor) is an active-site residue.

It belongs to the peptidase S49 family.

This Methanocaldococcus jannaschii (strain ATCC 43067 / DSM 2661 / JAL-1 / JCM 10045 / NBRC 100440) (Methanococcus jannaschii) protein is Putative protease MJ0651.